We begin with the raw amino-acid sequence, 327 residues long: MFDAAPIKKVSVVIPVYNEQESLPELIRRTTAACESLGKAWEILLIDDGSSDSSAELMVKASQEADSHIISILLNRNYGQHAAIMAGFSHVSGDLIITLDADLQNPPEEIPRLVAKADEGFDVVGTVRQNRQDSLFRKSASKIINLLIQRTTGKAMGDYGCMLRAYRRPIIDTMLRCHERSTFIPILANIFARRATEIPVHHAEREFGDSKYSFMRLINLMYDLVTCLTTTPLRLLSLLGSVIAIGGFSLSVLLIVLRLALGPQWAAEGVFMLFAVLFTFIGAQFIGMGLLGEYIGRIYNDVRARPRYFVQQVIYPESTPFTEESHQ.

The Cytoplasmic segment spans residues 1-235; it reads MFDAAPIKKV…TCLTTTPLRL (235 aa). A helical transmembrane segment spans residues 236–256; that stretch reads LSLLGSVIAIGGFSLSVLLIV. Residues 257–269 lie on the Periplasmic side of the membrane; that stretch reads LRLALGPQWAAEG. Residues 270–290 traverse the membrane as a helical segment; it reads VFMLFAVLFTFIGAQFIGMGL. Topologically, residues 291-327 are cytoplasmic; the sequence is LGEYIGRIYNDVRARPRYFVQQVIYPESTPFTEESHQ.

This sequence belongs to the glycosyltransferase 2 family.

The protein localises to the cell inner membrane. The enzyme catalyses UDP-4-deoxy-4-formamido-beta-L-arabinose + di-trans,octa-cis-undecaprenyl phosphate = 4-deoxy-4-formamido-alpha-L-arabinopyranosyl di-trans,octa-cis-undecaprenyl phosphate + UDP. It participates in glycolipid biosynthesis; 4-amino-4-deoxy-alpha-L-arabinose undecaprenyl phosphate biosynthesis; 4-amino-4-deoxy-alpha-L-arabinose undecaprenyl phosphate from UDP-4-deoxy-4-formamido-beta-L-arabinose and undecaprenyl phosphate: step 1/2. The protein operates within bacterial outer membrane biogenesis; lipopolysaccharide biosynthesis. Its function is as follows. Catalyzes the transfer of 4-deoxy-4-formamido-L-arabinose from UDP to undecaprenyl phosphate. The modified arabinose is attached to lipid A and is required for resistance to polymyxin and cationic antimicrobial peptides. This chain is Undecaprenyl-phosphate 4-deoxy-4-formamido-L-arabinose transferase, found in Salmonella dublin (strain CT_02021853).